Reading from the N-terminus, the 283-residue chain is Diaminopimelate epimerase (283 aa).

Residues N13 and N66 each contribute to the substrate site. C75 functions as the Proton donor in the catalytic mechanism. Residues G76–N77, N165, N198, and E216–R217 each bind substrate. Residue C225 is the Proton acceptor of the active site. Substrate is bound at residue G226 to T227.

This sequence belongs to the diaminopimelate epimerase family. Homodimer.

The protein localises to the cytoplasm. It carries out the reaction (2S,6S)-2,6-diaminopimelate = meso-2,6-diaminopimelate. It functions in the pathway amino-acid biosynthesis; L-lysine biosynthesis via DAP pathway; DL-2,6-diaminopimelate from LL-2,6-diaminopimelate: step 1/1. Its function is as follows. Catalyzes the stereoinversion of LL-2,6-diaminopimelate (L,L-DAP) to meso-diaminopimelate (meso-DAP), a precursor of L-lysine and an essential component of the bacterial peptidoglycan. In Acaryochloris marina (strain MBIC 11017), this protein is Diaminopimelate epimerase.